The chain runs to 295 residues: UDP-N-acetylenolpyruvoylglucosamine reductase (295 aa).

The FAD-binding PCMH-type domain maps to 23-188 (KVGGPADFLA…ISAKFALKPG (166 aa)). R167 is a catalytic residue. S217 (proton donor) is an active-site residue. The active site involves E287.

This sequence belongs to the MurB family. FAD is required as a cofactor.

The protein localises to the cytoplasm. It catalyses the reaction UDP-N-acetyl-alpha-D-muramate + NADP(+) = UDP-N-acetyl-3-O-(1-carboxyvinyl)-alpha-D-glucosamine + NADPH + H(+). It functions in the pathway cell wall biogenesis; peptidoglycan biosynthesis. In terms of biological role, cell wall formation. This chain is UDP-N-acetylenolpyruvoylglucosamine reductase, found in Streptococcus pyogenes serotype M28 (strain MGAS6180).